Here is a 541-residue protein sequence, read N- to C-terminus: Chaperonin GroEL 1 (541 aa).

ATP-binding positions include 29–32 (TLGP), 86–90 (DGTTT), Gly-413, 479–481 (NAA), and Asp-495.

The protein belongs to the chaperonin (HSP60) family. In terms of assembly, forms a cylinder of 14 subunits composed of two heptameric rings stacked back-to-back. Interacts with the co-chaperonin GroES.

The protein resides in the cytoplasm. It catalyses the reaction ATP + H2O + a folded polypeptide = ADP + phosphate + an unfolded polypeptide.. Functionally, together with its co-chaperonin GroES, plays an essential role in assisting protein folding. The GroEL-GroES system forms a nano-cage that allows encapsulation of the non-native substrate proteins and provides a physical environment optimized to promote and accelerate protein folding. In Synechocystis sp. (strain ATCC 27184 / PCC 6803 / Kazusa), this protein is Chaperonin GroEL 1.